The primary structure comprises 381 residues: Alkanesulfonate monooxygenase (381 aa).

Belongs to the SsuD family. In terms of assembly, homotetramer.

It catalyses the reaction an alkanesulfonate + FMNH2 + O2 = an aldehyde + FMN + sulfite + H2O + 2 H(+). In terms of biological role, catalyzes the desulfonation of aliphatic sulfonates. This chain is Alkanesulfonate monooxygenase, found in Citrobacter koseri (strain ATCC BAA-895 / CDC 4225-83 / SGSC4696).